The sequence spans 41 residues: Photosystem I reaction center subunit IX (41 aa).

A helical transmembrane segment spans residues 7–27; it reads YLSTAPVVAFAWLTFTAGFII.

It belongs to the PsaJ family.

It localises to the plastid. Its subcellular location is the chloroplast thylakoid membrane. Functionally, may help in the organization of the PsaE and PsaF subunits. This chain is Photosystem I reaction center subunit IX, found in Stigeoclonium helveticum (Green alga).